We begin with the raw amino-acid sequence, 429 residues long: Saccharopine dehydrogenase-like oxidoreductase (429 aa).

Alanine 2 bears the N-acetylalanine mark. At serine 217 the chain carries Phosphoserine.

This sequence belongs to the saccharopine dehydrogenase family.

This Homo sapiens (Human) protein is Saccharopine dehydrogenase-like oxidoreductase (SCCPDH).